The sequence spans 85 residues: Beta-insect depressant toxin Lqh-dprIT3g (85 aa).

The signal sequence occupies residues 1-21; it reads MKLLLLLTISASMLIEGLVNA. Positions 22 to 82 constitute an LCN-type CS-alpha/beta domain; sequence DGYIRGGDGC…EWDYETDTCG (61 aa). Cystine bridges form between cysteine 31-cysteine 81, cysteine 35-cysteine 56, cysteine 42-cysteine 63, and cysteine 46-cysteine 65. Residue glycine 82 is modified to Glycine amide.

This sequence belongs to the long (4 C-C) scorpion toxin superfamily. Sodium channel inhibitor family. Beta subfamily. As to expression, expressed by the venom gland.

It localises to the secreted. Functionally, depressant insect beta-toxins cause a transient contraction paralysis followed by a slow flaccid paralysis. They bind voltage-independently at site-4 of sodium channels (Nav) and block action potentials, primarily by depolarizing the axonal membrane and suppressing the sodium current. This depressant toxin is active only on insects. It is found in a relatively small amount in the venom. The polypeptide is Beta-insect depressant toxin Lqh-dprIT3g (Leiurus hebraeus (Hebrew deathstalker scorpion)).